Reading from the N-terminus, the 412-residue chain is Glucose-1-phosphate adenylyltransferase (412 aa).

Residues Y98, G163, E178–K179, and S189 contribute to the alpha-D-glucose 1-phosphate site.

This sequence belongs to the bacterial/plant glucose-1-phosphate adenylyltransferase family. In terms of assembly, homotetramer.

It catalyses the reaction alpha-D-glucose 1-phosphate + ATP + H(+) = ADP-alpha-D-glucose + diphosphate. It functions in the pathway glycan biosynthesis; glycogen biosynthesis. Its function is as follows. Involved in the biosynthesis of ADP-glucose, a building block required for the elongation reactions to produce glycogen. Catalyzes the reaction between ATP and alpha-D-glucose 1-phosphate (G1P) to produce pyrophosphate and ADP-Glc. The polypeptide is Glucose-1-phosphate adenylyltransferase (Thermosipho melanesiensis (strain DSM 12029 / CIP 104789 / BI429)).